The primary structure comprises 156 residues: Phosphopantetheine adenylyltransferase (156 aa).

Serine 9 serves as a coordination point for substrate. Residues 9–10 (SF) and histidine 17 each bind ATP. 3 residues coordinate substrate: lysine 41, isoleucine 74, and lysine 88. Residues 89–91 (GLR), glutamate 99, and 123–129 (LLHVSSS) contribute to the ATP site.

It belongs to the bacterial CoaD family. As to quaternary structure, homohexamer. Mg(2+) is required as a cofactor.

It localises to the cytoplasm. It catalyses the reaction (R)-4'-phosphopantetheine + ATP + H(+) = 3'-dephospho-CoA + diphosphate. It functions in the pathway cofactor biosynthesis; coenzyme A biosynthesis; CoA from (R)-pantothenate: step 4/5. In terms of biological role, reversibly transfers an adenylyl group from ATP to 4'-phosphopantetheine, yielding dephospho-CoA (dPCoA) and pyrophosphate. In Kocuria rhizophila (strain ATCC 9341 / DSM 348 / NBRC 103217 / DC2201), this protein is Phosphopantetheine adenylyltransferase.